A 142-amino-acid chain; its full sequence is Large ribosomal subunit protein uL22c (142 aa).

The protein belongs to the universal ribosomal protein uL22 family. In terms of assembly, part of the 50S ribosomal subunit.

The protein resides in the plastid. It localises to the chloroplast. This protein binds specifically to 23S rRNA. Functionally, the globular domain of the protein is located near the polypeptide exit tunnel on the outside of the subunit, while an extended beta-hairpin is found that lines the wall of the exit tunnel in the center of the 70S ribosome. This Picea abies (Norway spruce) protein is Large ribosomal subunit protein uL22c (rpl22).